A 1485-amino-acid polypeptide reads, in one-letter code: Actin cytoskeleton-regulatory complex protein pan1 (1485 aa).

Residues M1–K161 are disordered. Residues P21 to T49 show a composition bias toward low complexity. A compositionally biased stretch (polar residues) spans V59–F78. Positions F81 to F107 are enriched in low complexity. 2 stretches are compositionally biased toward polar residues: residues P111–L127 and R134–N144. In terms of domain architecture, EH 1 spans D174 to M262. One can recognise an EF-hand 1 domain in the interval L206–R241. 2 disordered regions span residues F268–N309 and F323–A342. The segment covering P296–Q305 has biased composition (pro residues). A compositionally biased stretch (polar residues) spans F323–L338. One can recognise an EH 2 domain in the interval E465–N554. Residues L498–K533 enclose the EF-hand 2 domain. 3 disordered regions span residues A620–L649, A799–R871, and R895–G1485. Residues S645–H765 are a coiled coil. 2 stretches are compositionally biased toward basic and acidic residues: residues A816–R871 and V899–P920. Low complexity predominate over residues S921–A941. Composition is skewed to basic and acidic residues over residues T942–E960, R980–G1016, A1062–A1137, and A1144–L1156. Positions E1054–E1172 form a coiled coil. The segment covering E1161–G1173 has biased composition (acidic residues). Over residues I1177–Q1188 the composition is skewed to polar residues. Low complexity-rich tracts occupy residues V1189–E1201 and P1210–S1226. 2 stretches are compositionally biased toward polar residues: residues I1238 to S1248 and Q1255 to P1270. Over residues L1290–E1299 the composition is skewed to basic and acidic residues. Positions S1353–T1363 are enriched in polar residues. The segment covering V1364 to P1379 has biased composition (low complexity). Pro residues-rich tracts occupy residues A1380–S1394 and T1406–A1441. Low complexity predominate over residues A1442–A1451. Residues D1452–V1469 enclose the WH2 domain. Residues N1472–G1485 are compositionally biased toward polar residues.

This sequence belongs to the PAN1 family. As to quaternary structure, component of the PAN1 actin cytoskeleton-regulatory complex.

It is found in the cell membrane. The protein resides in the endosome membrane. The protein localises to the cytoplasm. Its subcellular location is the cytoskeleton. It localises to the actin patch. Functionally, component of the PAN1 actin cytoskeleton-regulatory complex required for the internalization of endosomes during actin-coupled endocytosis. The complex links the site of endocytosis to the cell membrane-associated actin cytoskeleton. Mediates uptake of external molecules and vacuolar degradation of plasma membrane proteins. Plays a role in the proper organization of the cell membrane-associated actin cytoskeleton and promotes its destabilization. The sequence is that of Actin cytoskeleton-regulatory complex protein pan1 (pan1) from Aspergillus clavatus (strain ATCC 1007 / CBS 513.65 / DSM 816 / NCTC 3887 / NRRL 1 / QM 1276 / 107).